The sequence spans 355 residues: Guanine nucleotide-binding protein alpha-12 subunit (355 aa).

The G-alpha domain occupies 28–355 (RQINLLLLGS…EQNLKTLMMQ (328 aa)). Positions 31-44 (NLLLLGSGESGKST) are G1 motif. Residues 36–43 (GSGESGKS), 176–182 (LFCRKAT), 201–205 (DVGGQ), 270–273 (NKND), and Ala-327 contribute to the GTP site. The Mg(2+) site is built by Ser-43 and Thr-182. Residues 174–182 (DILFCRKAT) are G2 motif. The tract at residues 197–206 (FRFIDVGGQR) is G3 motif. The G4 motif stretch occupies residues 266–273 (ILFMNKND). Residues 325–330 (TTAVDT) form a G5 motif region.

Belongs to the G-alpha family. As to quaternary structure, g proteins are composed of 3 units; alpha, beta and gamma. The alpha chain contains the guanine nucleotide binding site.

In terms of biological role, guanine nucleotide-binding proteins (G proteins) are involved as modulators or transducers in various transmembrane signaling systems. May play a role in resistance to fungal infection in the epidermis by regulating the up-regulation of several antimicrobial peptides of the NLP and CNC families. Upstream of plc-3, tpa-1 and the p38-like pathway, required for the expression of antimicrobial peptide nlp-29 in the epidermis in response to fungal infection or physical injury. This Caenorhabditis elegans protein is Guanine nucleotide-binding protein alpha-12 subunit (gpa-12).